Here is a 1091-residue protein sequence, read N- to C-terminus: Protein CTR9 homolog (1091 aa).

Residue alanine 2 is modified to N-acetylalanine. 16 TPR repeats span residues 90–127, 128–161, 163–195, 197–230, 232–267, 305–338, 343–376, 377–410, 412–443, 449–482, 558–591, 593–625, 640–673, 674–707, 713–746, and 749–782; these read GAYYSYLGKTETKNREKEEQFISATRYYNKASRIDMHE, PSTWVGKGQLLLAKGEIDNALQAFKIVLDTAPDN, PALLGQASVEFNRGRFSESLQLYKRALQVFPGC, AAVRLGIGLCRYKLGQLDKARQAFDRVLQLDPDN, EALVALGIMDLQANDSIGMRKGMDRMQQAFEIYPYC, SHSFYNLARSYHSKGDFEKAGMYYMAAIKETNNN, VFPYFGLGQVQLKLGELKGSVFNFEKVLEVYPDN, CETLKALGHLYTQLGQNEKALEYMRKATKLDPRD, QAFVGLGELLISSDTGAALDAFKMARTLMKKG, IEVLNDIGALHFEREEFESALENFKEALGDGIWI, IDAYLRLAASAKAQNNLPLAIELVNEALKVDDKN, NALSLLGELELKNDDWVKAKETFRAANDATDGK, AAMRNEKRNPKLEATHLEKAKELYTKVLTQHNSN, MYAANGSGIVLAEKGQFDIAKDVFTQVQEAASGS, PDVWVNLAHVYFAQGNFALTVKMYQNCLRKFFYN, and SQILLYLARTHYEAEQWQECKKTLLRAIHLTPSN. The disordered stretch occupies residues 919–1091; the sequence is FQRIKEQWKS…EEEEEEEEAN (173 aa). The segment covering 951–965 has biased composition (basic residues); that stretch reads ERRRKKGGKRRKKDK. 4 stretches are compositionally biased toward acidic residues: residues 974–993, 1003–1016, 1026–1035, and 1080–1091; these read DDEEEAATMDDHNEVEDEDA, MTTQEAEEPVDDDA, EDPDVDDDEV, and NMEEEEEEEEAN.

As to quaternary structure, component of the nuclear PAF1 complex (PAF1C), which consists of VIP2/ELF7/PAF1, VIP3/SKI8/WDR61, VIP4/LEO1, VIP5/RTF1, VIP6/ELF8/CTR9 and CDC73. Interacts with VIP3 and VIP4. As to expression, expressed in roots, leaves and shoot apex.

It is found in the nucleus. Functionally, component of the PAF1 complex (PAF1C) which is involved in histone modifications such as methylation on histone H3 'Lys-4' (H3K4me3). Involved in regulation of flowering time. Required for the expression of the MADS box genes and flowering repressors FLC, AGL27/FLM and AGL31/MAF2. Required for histone H3 trimethylation on 'Lys-4' H3K4me3 at the FLC and AGL27/FLM loci. Involved in the control of seed dormancy and germination. This chain is Protein CTR9 homolog, found in Arabidopsis thaliana (Mouse-ear cress).